Reading from the N-terminus, the 201-residue chain is Ras-related protein Rab-1B (201 aa).

The residue at position 1 (M1) is an N-acetylmethionine. Residues S17, G18, V19, G20, K21, S22, C23, Y33, T34, E35, S36, S39, and T40 each contribute to the GTP site. Position 22 (S22) interacts with Mg(2+). A Switch 1 motif is present at residues 30–45; it reads DDTYTESYISTIGVDF. Positions 40 and 63 each coordinate Mg(2+). A switch 2 region; required for interaction with REP1/CHM region spans residues 64-83; sequence TAGQERFRTVTSSYYRGAHG. Residues 65–80 carry the Switch 2 motif; that stretch reads AGQERFRTVTSSYYRG. 7 residues coordinate GTP: G66, N121, K122, D124, S151, A152, and K153. The interval 173–201 is disordered; the sequence is MGPGAASGGERPNLKIDSTPVKSASGGCC. 2 S-geranylgeranyl cysteine lipidation sites follow: C200 and C201. C201 is modified (cysteine methyl ester).

The protein belongs to the small GTPase superfamily. Rab family. In terms of assembly, interacts with MICAL1 and MICAL2. Interacts (in GTP-bound form) with MICALCL, MICAL1 and MILCAL3. Interacts with GDI1; the interaction requires the GDP-bound state. Interacts with CHM/REP1; the interaction requires the GDP-bound form and is necessary for prenylation by GGTase II. Interacts with RabGAP TBC1D20. Interacts (in GDP-bound form) with lipid phosphatase MTMR6 (via GRAM domain); the interaction regulates MTMR6 recruitment to the endoplasmic reticulum-Golgi intermediate compartment. Interacts (in GDP-bound form) with lipid phosphatase MTMR7. It depends on Mg(2+) as a cofactor. In terms of processing, prenylated; by GGTase II, only after interaction of the substrate with Rab escort protein 1 (REP1).

The protein localises to the cytoplasm. It localises to the membrane. It is found in the preautophagosomal structure membrane. Its subcellular location is the perinuclear region. It catalyses the reaction GTP + H2O = GDP + phosphate + H(+). Its activity is regulated as follows. Regulated by guanine nucleotide exchange factors (GEFs) which promote the exchange of bound GDP for free GTP. Regulated by GTPase activating proteins (GAPs) including TBC1D20 which increases the GTP hydrolysis activity. Inhibited by GDP dissociation inhibitors (GDIs). Functionally, the small GTPases Rab are key regulators of intracellular membrane trafficking, from the formation of transport vesicles to their fusion with membranes. Rabs cycle between an inactive GDP-bound form and an active GTP-bound form that is able to recruit to membranes different set of downstream effectors directly responsible for vesicle formation, movement, tethering and fusion. Plays a role in the initial events of the autophagic vacuole development which take place at specialized regions of the endoplasmic reticulum. Regulates vesicular transport between the endoplasmic reticulum and successive Golgi compartments. Required to modulate the compacted morphology of the Golgi. Promotes the recruitment of lipid phosphatase MTMR6 to the endoplasmic reticulum-Golgi intermediate compartment. This chain is Ras-related protein Rab-1B (Rab1b), found in Rattus norvegicus (Rat).